The primary structure comprises 258 residues: Imidazole glycerol phosphate synthase subunit HisF (258 aa).

Active-site residues include D11 and D130.

This sequence belongs to the HisA/HisF family. Heterodimer of HisH and HisF.

It is found in the cytoplasm. The enzyme catalyses 5-[(5-phospho-1-deoxy-D-ribulos-1-ylimino)methylamino]-1-(5-phospho-beta-D-ribosyl)imidazole-4-carboxamide + L-glutamine = D-erythro-1-(imidazol-4-yl)glycerol 3-phosphate + 5-amino-1-(5-phospho-beta-D-ribosyl)imidazole-4-carboxamide + L-glutamate + H(+). Its pathway is amino-acid biosynthesis; L-histidine biosynthesis; L-histidine from 5-phospho-alpha-D-ribose 1-diphosphate: step 5/9. Its function is as follows. IGPS catalyzes the conversion of PRFAR and glutamine to IGP, AICAR and glutamate. The HisF subunit catalyzes the cyclization activity that produces IGP and AICAR from PRFAR using the ammonia provided by the HisH subunit. The protein is Imidazole glycerol phosphate synthase subunit HisF of Magnetococcus marinus (strain ATCC BAA-1437 / JCM 17883 / MC-1).